The primary structure comprises 199 residues: NADH-quinone oxidoreductase subunit I (199 aa).

4Fe-4S ferredoxin-type domains are found at residues 45 to 75 (LNRHPDGLEKCIGCELCAWACPADAIYVEGA) and 91 to 120 (RVYQINYLRCIFCGYCIEACPTRALTMSNE). [4Fe-4S] cluster-binding residues include C55, C58, C61, C65, C100, C103, C106, and C110. Residues 164–199 (GTPAAHMLSGEDDAASETTLDRSDDHSATYEEAERP) form a disordered region. Positions 182–199 (TLDRSDDHSATYEEAERP) are enriched in basic and acidic residues.

The protein belongs to the complex I 23 kDa subunit family. In terms of assembly, NDH-1 is composed of 14 different subunits. Subunits NuoA, H, J, K, L, M, N constitute the membrane sector of the complex. [4Fe-4S] cluster is required as a cofactor.

The protein resides in the cell membrane. The catalysed reaction is a quinone + NADH + 5 H(+)(in) = a quinol + NAD(+) + 4 H(+)(out). Functionally, NDH-1 shuttles electrons from NADH, via FMN and iron-sulfur (Fe-S) centers, to quinones in the respiratory chain. The immediate electron acceptor for the enzyme in this species is believed to be ubiquinone. Couples the redox reaction to proton translocation (for every two electrons transferred, four hydrogen ions are translocated across the cytoplasmic membrane), and thus conserves the redox energy in a proton gradient. The polypeptide is NADH-quinone oxidoreductase subunit I (Acidothermus cellulolyticus (strain ATCC 43068 / DSM 8971 / 11B)).